The primary structure comprises 432 residues: Ornithine decarboxylase (432 aa).

Residue K98 is modified to N6-(pyridoxal phosphate)lysine. Pyridoxal 5'-phosphate contacts are provided by residues S229, G266, and 296-299 (EPGR). 341–342 (FD) contributes to the substrate binding site. The Proton donor; shared with dimeric partner role is filled by C377. D378 is a substrate binding site. Y407 lines the pyridoxal 5'-phosphate pocket.

It belongs to the Orn/Lys/Arg decarboxylase class-II family. Homodimer. Only the dimer is catalytically active, as the active sites are constructed of residues from both monomers. The cofactor is pyridoxal 5'-phosphate.

The protein resides in the cytoplasm. It catalyses the reaction L-ornithine + H(+) = putrescine + CO2. It participates in amine and polyamine biosynthesis; putrescine biosynthesis via L-ornithine pathway; putrescine from L-ornithine: step 1/1. With respect to regulation, inhibited by antizyme (AZ) OAZ1 in response to polyamine levels. AZ inhibits the assembly of the functional homodimer by binding to ODC monomers and targeting them for ubiquitin-independent proteolytic destruction by the 26S proteasome. Catalyzes the first and rate-limiting step of polyamine biosynthesis that converts ornithine into putrescine, which is the precursor for the polyamines, spermidine and spermine. Polyamines are essential for cell proliferation and are implicated in cellular processes, ranging from DNA replication to apoptosis. The polypeptide is Ornithine decarboxylase (spe1) (Schizosaccharomyces pombe (strain 972 / ATCC 24843) (Fission yeast)).